The following is a 296-amino-acid chain: Enoyl-CoA hydratase ACTT3 (296 aa).

The Peroxisomal targeting signal type 1 motif lies at 294-296 (PKL).

This sequence belongs to the enoyl-CoA hydratase/isomerase family.

It is found in the peroxisome. It carries out the reaction a (3S)-3-hydroxyacyl-CoA = a (2E)-enoyl-CoA + H2O. It catalyses the reaction a 4-saturated-(3S)-3-hydroxyacyl-CoA = a (3E)-enoyl-CoA + H2O. It participates in mycotoxin biosynthesis. Functionally, enoyl-CoA hydratase; part of the gene clusters that mediate the biosynthesis of the host-selective toxins (HSTs) ACT-toxins responsible for brown spot of tangerine disease by the tangerine pathotype which affects tangerines and mandarins. ACT-toxins consist of three moieties, 9,10-epoxy-8-hydroxy-9-methyl-decatrienoic acid (EDA), valine and a polyketide. ACT-toxin I is toxic to both citrus and pear; toxin II the 5''-deoxy derivative of ACT-toxin I, is highly toxic to pear and slightly toxic to citrus. On cellular level, ACT-toxins affect plasma membrane of susceptible cells and cause a sudden increase in loss of K(+) after a few minutes of toxin treatment. The acyl-CoA ligase ACTT1, the hydrolase ACTT2, the enoyl-CoA hydratases ACTT3 and ACTT6, and the acyl-CoA synthetase ACTT5 are all involved in the biosynthesis of the AK-, AF- and ACT-toxin common 9,10-epoxy-8-hydroxy-9-methyl-decatrienoic acid (EDA) structural moiety. The exact role of each enzyme, and of additional enzymes identified within the AF-toxin clusters have still to be determined. On the other hand, ACTTS1 to ACTTS4 are specific to the tangerine pathotype. The function of ACTTS3 is to elongate the polyketide chain portion of ACT-toxin that is unique to this toxin. The enoyl-reductase ACTTS2 might complement the missing enoyl-reductase (ER) domain in ACTTS3 in the synthesis of the polyketide portion of ACT-toxin. The roles of the nonribosomal peptide synthetases-related proteins ACTTS1 and ACTTS4 have also still not been elucidated. In Alternaria alternata (Alternaria rot fungus), this protein is Enoyl-CoA hydratase ACTT3.